The sequence spans 361 residues: Chorismate synthase (361 aa).

R48 is an NADP(+) binding site. Residues 125–127 (RSS), 238–239 (NA), G278, 293–297 (KPTSS), and R319 contribute to the FMN site.

This sequence belongs to the chorismate synthase family. In terms of assembly, homotetramer. FMNH2 serves as cofactor.

The enzyme catalyses 5-O-(1-carboxyvinyl)-3-phosphoshikimate = chorismate + phosphate. Its pathway is metabolic intermediate biosynthesis; chorismate biosynthesis; chorismate from D-erythrose 4-phosphate and phosphoenolpyruvate: step 7/7. In terms of biological role, catalyzes the anti-1,4-elimination of the C-3 phosphate and the C-6 proR hydrogen from 5-enolpyruvylshikimate-3-phosphate (EPSP) to yield chorismate, which is the branch point compound that serves as the starting substrate for the three terminal pathways of aromatic amino acid biosynthesis. This reaction introduces a second double bond into the aromatic ring system. In Vibrio anguillarum (strain ATCC 68554 / 775) (Listonella anguillarum), this protein is Chorismate synthase.